The chain runs to 210 residues: SAP domain-containing ribonucleoprotein (210 aa).

Alanine 2 is subject to N-acetylalanine. Positions 8 to 42 (LHKLKLAELKQECLARGLETKGIKQDLIHRLQAYL) constitute an SAP domain. Lysine 10 is modified (N6-acetyllysine). The span at 45–64 (HAEEEANEEDVLGDETEEEE) shows a compositional bias: acidic residues. The segment at 45–86 (HAEEEANEEDVLGDETEEEETKPIELPVKEEEPPEKTVDVAA) is disordered. Residues 65 to 86 (TKPIELPVKEEEPPEKTVDVAA) are compositionally biased toward basic and acidic residues. Lysine 142 is subject to N6-acetyllysine. The interval 161–210 (VSSISRKSEDDEKLKKRKERFGIVTSSAGTGTTEDTEAKKRKRAERFGIA) is disordered. Serine 163 is modified (phosphoserine). The segment covering 184-193 (VTSSAGTGTT) has biased composition (polar residues).

Belongs to the SAP domain-containing ribonucleoprotein family. As to quaternary structure, interacts with DDX39A. Interacts with FUS. Interacts (via the C-terminal domain) with DDX39B; the interaction is direct and facilitates RNA binding of DDX39B. Component of the transcription/export (TREX) complex at least composed of ALYREF/THOC4, DDX39B, SARNP/CIP29, CHTOP and the THO subcomplex; TREX seems to have dynamic structure involving ATP-dependent remodeling; in the complex interacts directly with DDX39B in a ATP-dependent manner which bridges it to ALYREF/THOC4. In terms of tissue distribution, low expression in spleen, liver, pancreas, testis, thymus, heart, and kidney. Increased levels are seen in hepatocellular carcinoma and pancreatic adenocarcinoma.

The protein localises to the nucleus. It localises to the nucleus speckle. Its function is as follows. Binds both single-stranded and double-stranded DNA with higher affinity for the single-stranded form. Specifically binds to scaffold/matrix attachment region DNA. Also binds single-stranded RNA. Enhances RNA unwinding activity of DDX39A. May participate in important transcriptional or translational control of cell growth, metabolism and carcinogenesis. Component of the TREX complex which is thought to couple mRNA transcription, processing and nuclear export, and specifically associates with spliced mRNA and not with unspliced pre-mRNA. The TREX complex is recruited to spliced mRNAs by a transcription-independent mechanism, binds to mRNA upstream of the exon-junction complex (EJC) and is recruited in a splicing- and cap-dependent manner to a region near the 5' end of the mRNA where it functions in mRNA export to the cytoplasm via the TAP/NXF1 pathway. Associates with DDX39B, which facilitates RNA binding of DDX39B and likely plays a role in mRNA export. In Homo sapiens (Human), this protein is SAP domain-containing ribonucleoprotein (SARNP).